The following is a 375-amino-acid chain: uncharacterized protein (375 aa).

K99 is covalently cross-linked (Isoglutamyl lysine isopeptide (Lys-Gln) (interchain with Q-Cter in protein Pup)).

It belongs to the IMPDH/GMPR family.

This is an uncharacterized protein from Mycolicibacterium smegmatis (strain ATCC 700084 / mc(2)155) (Mycobacterium smegmatis).